Here is a 128-residue protein sequence, read N- to C-terminus: Large ribosomal subunit protein bL17 (128 aa).

Belongs to the bacterial ribosomal protein bL17 family. As to quaternary structure, part of the 50S ribosomal subunit. Contacts protein L32.

This Streptococcus thermophilus (strain ATCC BAA-250 / LMG 18311) protein is Large ribosomal subunit protein bL17.